The sequence spans 294 residues: Eukaryotic translation initiation factor 3 subunit G (294 aa).

The segment covering 1–22 has biased composition (basic and acidic residues); sequence MQTFHHQDTGSEDFRQNTMDEK. 2 disordered regions span residues 1 to 42 and 164 to 211; these read MQTF…DGTK and GGMG…SDDD. A compositionally biased stretch (polar residues) spans 30-42; that stretch reads STPQITQNADGTK. Over residues 193–205 the composition is skewed to gly residues; that stretch reads GPGGPGGPGGAAG. Positions 214–292 constitute an RRM domain; it reads LTLRVTNLSE…LIMKVDYSKK (79 aa).

Belongs to the eIF-3 subunit G family. Component of the eukaryotic translation initiation factor 3 (eIF-3) complex.

The protein resides in the cytoplasm. RNA-binding component of the eukaryotic translation initiation factor 3 (eIF-3) complex, which is involved in protein synthesis of a specialized repertoire of mRNAs and, together with other initiation factors, stimulates binding of mRNA and methionyl-tRNAi to the 40S ribosome. The eIF-3 complex specifically targets and initiates translation of a subset of mRNAs involved in cell proliferation. This subunit can bind 18S rRNA. The chain is Eukaryotic translation initiation factor 3 subunit G from Yarrowia lipolytica (strain CLIB 122 / E 150) (Yeast).